Reading from the N-terminus, the 475-residue chain is Probable proline--tRNA ligase, mitochondrial (475 aa).

The transit peptide at 1–29 directs the protein to the mitochondrion; it reads MEGLLTRCRALPALATCSRQLSGYVPCRF.

The protein belongs to the class-II aminoacyl-tRNA synthetase family.

It is found in the mitochondrion matrix. The enzyme catalyses tRNA(Pro) + L-proline + ATP = L-prolyl-tRNA(Pro) + AMP + diphosphate. Functionally, mitochondrial aminoacyl-tRNA synthetase that catalyzes the specific attachment of the proline amino acid (aa) to the homologous transfer RNA (tRNA), further participating in protein synthesis. The reaction occurs in a two steps: proline is first activated by ATP to form Pro-AMP and then transferred to the acceptor end of tRNA(Pro). This Homo sapiens (Human) protein is Probable proline--tRNA ligase, mitochondrial.